We begin with the raw amino-acid sequence, 424 residues long: 3-phosphoshikimate 1-carboxyvinyltransferase (424 aa).

Lys-21, Ser-22, and Arg-26 together coordinate 3-phosphoshikimate. A phosphoenolpyruvate-binding site is contributed by Lys-21. Residues Gly-91 and Arg-119 each contribute to the phosphoenolpyruvate site. Residues Ser-164, Gln-166, Asp-310, and Lys-337 each contribute to the 3-phosphoshikimate site. Gln-166 contributes to the phosphoenolpyruvate binding site. The Proton acceptor role is filled by Asp-310. Residues Arg-341 and Arg-382 each coordinate phosphoenolpyruvate.

It belongs to the EPSP synthase family. In terms of assembly, monomer.

Its subcellular location is the cytoplasm. The catalysed reaction is 3-phosphoshikimate + phosphoenolpyruvate = 5-O-(1-carboxyvinyl)-3-phosphoshikimate + phosphate. Its pathway is metabolic intermediate biosynthesis; chorismate biosynthesis; chorismate from D-erythrose 4-phosphate and phosphoenolpyruvate: step 6/7. In terms of biological role, catalyzes the transfer of the enolpyruvyl moiety of phosphoenolpyruvate (PEP) to the 5-hydroxyl of shikimate-3-phosphate (S3P) to produce enolpyruvyl shikimate-3-phosphate and inorganic phosphate. This chain is 3-phosphoshikimate 1-carboxyvinyltransferase, found in Campylobacter curvus (strain 525.92).